An 840-amino-acid chain; its full sequence is Probable inorganic carbon transporter subunit DabA 2 (840 aa).

Zn(2+) contacts are provided by Cys-356, Asp-358, His-540, and Cys-555.

The protein belongs to the inorganic carbon transporter (TC 9.A.2) DabA family. In terms of assembly, forms a complex with DabB. Zn(2+) serves as cofactor.

The protein localises to the cell inner membrane. In terms of biological role, part of an energy-coupled inorganic carbon pump. The sequence is that of Probable inorganic carbon transporter subunit DabA 2 from Bradyrhizobium sp. (strain ORS 278).